The primary structure comprises 300 residues: Cutinase est2 (300 aa).

Positions 1-39 (MSVTTPRRETSLLSRALRATAAAATAVVATVALAAPAQA) are cleaved as a signal peptide. Residue tyrosine 99 participates in poly(ethylene terephthalate) binding. The active-site Nucleophile is the serine 169. 2 residues coordinate poly(ethylene terephthalate): methionine 170 and tryptophan 194. Ca(2+) is bound at residue glutamate 213. Aspartate 215 functions as the Charge relay system in the catalytic mechanism. Aspartate 243 is a binding site for Ca(2+). The Charge relay system role is filled by histidine 247. A disulfide bond links cysteine 280 and cysteine 298. Ca(2+) is bound at residue glutamate 292.

It belongs to the AB hydrolase superfamily. In terms of assembly, monomer. Requires Ca(2+) as cofactor.

It localises to the secreted. The protein localises to the periplasm. It catalyses the reaction an acetyl ester + H2O = an aliphatic alcohol + acetate + H(+). The catalysed reaction is (ethylene terephthalate)(n) + H2O = (ethylene terephthalate)(n-1) + 4-[(2-hydroxyethoxy)carbonyl]benzoate + H(+). It carries out the reaction a butanoate ester + H2O = an aliphatic alcohol + butanoate + H(+). The enzyme catalyses cutin + H2O = cutin monomers.. It catalyses the reaction a hexanoate ester + H2O = an aliphatic alcohol + hexanoate + H(+). The catalysed reaction is an octanoate ester + H2O = an aliphatic alcohol + octanoate + H(+). With respect to regulation, activated by calcium ions. Activated by magnesium ions. Activated by manganese ions. Inhibited by the serine hydrolase inhibitor phenylmethanesulfonyl fluoride (PMSF). Inhibited by the chelator ethylenediaminetetraacetic acid (EDTA). Inhibited by iron ions. Inhibited by aluminum ions. Inhibited by rubidium ions. Inhibited by lithium ions. Catalyzes the hydrolysis of cutin, a polyester that forms the structure of plant cuticle. Shows esterase activity towards p-nitrophenol-linked aliphatic esters (pNP-aliphatic esters). Capable of degrading the plastic poly(ethylene terephthalate) (PET), the most abundant polyester plastic in the world. Can also depolymerize the synthetic polyesters poly(epsilon-caprolactone) (PCL), poly(butylene succinate-co-adipate) (PBSA), poly(butylene succinate) (PBS), and poly(lactic acid) (PLA). This Thermobifida alba (Thermomonospora alba) protein is Cutinase est2.